A 162-amino-acid polypeptide reads, in one-letter code: Protein cornichon homolog 2 (162 aa).

The Cytoplasmic portion of the chain corresponds to 1 to 10; sequence MAFTFAAFCY. A helical transmembrane segment spans residues 11-31; it reads MLTLVLCASLIFFIIWHIIAF. Topologically, residues 32–72 are lumenal; it reads DDLRTDFKDPIEQGNPSRARERIKNVERVCCLLRKLVVPEY. Residues 73–93 form a helical membrane-spanning segment; sequence CIHGLFCLMFMCAAEWVTLGL. Over 94–138 the chain is Cytoplasmic; that stretch reads NIPLLFYHLWRYFHRPADGSEVMFDPVSIMNVDILNYCQKEAWCK. The chain crosses the membrane as a helical span at residues 139-161; that stretch reads LAFYLLSFFYYLYRVGATVRYVS. Residue alanine 162 is a topological domain, lumenal.

It belongs to the cornichon family.

The protein resides in the membrane. In terms of biological role, regulates the trafficking and gating properties of AMPA-selective glutamate receptors (AMPARs). The polypeptide is Protein cornichon homolog 2 (cnih2) (Xenopus laevis (African clawed frog)).